The following is a 248-amino-acid chain: Probable transcriptional regulatory protein blr1534 (248 aa).

The interval 1–21 (MAGHSQFKNIMHRKGRQDAQK) is disordered.

It belongs to the TACO1 family.

It localises to the cytoplasm. The sequence is that of Probable transcriptional regulatory protein blr1534 from Bradyrhizobium diazoefficiens (strain JCM 10833 / BCRC 13528 / IAM 13628 / NBRC 14792 / USDA 110).